A 313-amino-acid chain; its full sequence is GMP synthase [glutamine-hydrolyzing] subunit B (313 aa).

A GMPS ATP-PPase domain is found at 6–190 (KVWEKFIEEK…LGLPEKIYNR (185 aa)). 33–39 (SGGVDSS) is a binding site for ATP.

As to quaternary structure, heterodimer composed of a glutamine amidotransferase subunit (A) and a GMP-binding subunit (B).

It catalyses the reaction XMP + L-glutamine + ATP + H2O = GMP + L-glutamate + AMP + diphosphate + 2 H(+). It participates in purine metabolism; GMP biosynthesis; GMP from XMP (L-Gln route): step 1/1. In terms of biological role, catalyzes the synthesis of GMP from XMP. The protein is GMP synthase [glutamine-hydrolyzing] subunit B (guaAB) of Pyrococcus furiosus (strain ATCC 43587 / DSM 3638 / JCM 8422 / Vc1).